Reading from the N-terminus, the 433-residue chain is Tol-Pal system protein TolB (433 aa).

A signal peptide spans 1–21 (MRNLLRGMLVVICCMAGIAAA).

This sequence belongs to the TolB family. As to quaternary structure, the Tol-Pal system is composed of five core proteins: the inner membrane proteins TolA, TolQ and TolR, the periplasmic protein TolB and the outer membrane protein Pal. They form a network linking the inner and outer membranes and the peptidoglycan layer.

The protein localises to the periplasm. In terms of biological role, part of the Tol-Pal system, which plays a role in outer membrane invagination during cell division and is important for maintaining outer membrane integrity. This Pseudomonas fluorescens (strain ATCC BAA-477 / NRRL B-23932 / Pf-5) protein is Tol-Pal system protein TolB.